The primary structure comprises 445 residues: ATP-dependent rRNA helicase rrp3 (445 aa).

Over residues 1–10 (MSKNSSRDSS) the composition is skewed to basic and acidic residues. The disordered stretch occupies residues 1–28 (MSKNSSRDSSPEEVSPDTETPSTTTAPK). A compositionally biased stretch (low complexity) spans 17-28 (DTETPSTTTAPK). The Q motif motif lies at 28 to 56 (KTFRELGVIDSLCEACEELGYTAPTPIQE). Residues 59-229 (IPIALEGRDL…RASLSDPVRV (171 aa)) form the Helicase ATP-binding domain. 72–79 (AETGSGKT) serves as a coordination point for ATP. Residues 178-181 (DEAD) carry the DEAD box motif. Residues 240-400 (KLLQSYLFIP…EYKPEKDEVM (161 aa)) enclose the Helicase C-terminal domain. The interval 415-445 (LTMRDMQDKDNKGRGPRNRKRTRDDLDQDDG) is disordered.

It belongs to the DEAD box helicase family. DDX47/RRP3 subfamily. Interacts with the SSU processome.

Its subcellular location is the nucleus. It carries out the reaction ATP + H2O = ADP + phosphate + H(+). In terms of biological role, ATP-dependent rRNA helicase required for pre-ribosomal RNA processing. Involved in the maturation of the 35S-pre-rRNA and to its cleavage to mature 18S rRNA. This Aspergillus terreus (strain NIH 2624 / FGSC A1156) protein is ATP-dependent rRNA helicase rrp3.